The following is a 211-amino-acid chain: Beta-crystallin B3 (211 aa).

The residue at position 1 (Met-1) is an N-acetylmethionine. N-acetylalanine; in Beta-crystallin B3, N-terminally processed is present on Ala-2. Residues 2–23 (AEQHGAPEQAAAGKSHGGLGGS) are N-terminal arm. Beta/gamma crystallin 'Greek key' domains follow at residues 24 to 63 (YKVTVYELENFQGKRCELSAECPNLTDSLLEKVGSIQVES) and 64 to 108 (GPWL…RPLH). A connecting peptide region spans residues 109–113 (IDGPD). Beta/gamma crystallin 'Greek key' domains lie at 114-155 (HKLH…RVIN) and 156-198 (GTWV…RRIR). The segment at 200-211 (QKWHKRGCFLSS) is C-terminal arm.

Belongs to the beta/gamma-crystallin family. Homo/heterodimer, or complexes of higher-order. The structure of beta-crystallin oligomers seems to be stabilized through interactions between the N-terminal arms.

In terms of biological role, crystallins are the dominant structural components of the vertebrate eye lens. In Mus musculus (Mouse), this protein is Beta-crystallin B3 (Crybb3).